Here is a 225-residue protein sequence, read N- to C-terminus: Uridylate kinase (225 aa).

An ATP-binding site is contributed by 9–10 (GS). A UMP-binding site is contributed by G46. Residues G47 and R51 each coordinate ATP. UMP contacts are provided by residues D67 and 115-121 (THPAHTT). ATP is bound by residues T141, N142, Y147, and D150.

This sequence belongs to the UMP kinase family. In terms of assembly, homohexamer.

Its subcellular location is the cytoplasm. The enzyme catalyses UMP + ATP = UDP + ADP. It participates in pyrimidine metabolism; CTP biosynthesis via de novo pathway; UDP from UMP (UMPK route): step 1/1. With respect to regulation, inhibited by UTP. Functionally, catalyzes the reversible phosphorylation of UMP to UDP. The protein is Uridylate kinase of Methanococcus maripaludis (strain C5 / ATCC BAA-1333).